Reading from the N-terminus, the 552-residue chain is Urocanate hydratase (552 aa).

Residues 49–50 (GG), Gln-127, 173–175 (GMG), Asp-193, 239–240 (NA), 260–264 (QTSAH), 270–271 (YI), and Tyr-319 each bind NAD(+). The active site involves Cys-407. Gly-489 provides a ligand contact to NAD(+).

It belongs to the urocanase family. NAD(+) serves as cofactor.

The protein localises to the cytoplasm. It carries out the reaction 4-imidazolone-5-propanoate = trans-urocanate + H2O. The protein operates within amino-acid degradation; L-histidine degradation into L-glutamate; N-formimidoyl-L-glutamate from L-histidine: step 2/3. Functionally, catalyzes the conversion of urocanate to 4-imidazolone-5-propionate. The protein is Urocanate hydratase of Bacillus mycoides (strain KBAB4) (Bacillus weihenstephanensis).